The following is a 129-amino-acid chain: M-zodatoxin-Lt8c (129 aa).

A signal peptide spans 1-20; sequence MKYFVVALALVAAFACIAES. A propeptide spanning residues 21–60 is cleaved from the precursor; that stretch reads KPAESEHELAEVEEENELADLEDAVWLEHLADLSDLEEAR. The Processing quadruplet motif signature appears at 57-60; it reads EEAR.

In terms of processing, cleavage of the propeptide depends on the processing quadruplet motif (XXXR, with at least one of X being E). Expressed by the venom gland.

The protein localises to the secreted. Its function is as follows. Insecticidal, cytolytic and antimicrobial peptide. Forms voltage-dependent, ion-permeable channels in membranes. At high concentration causes cell membrane lysis. The polypeptide is M-zodatoxin-Lt8c (cit 1-3) (Lachesana tarabaevi (Spider)).